The primary structure comprises 547 residues: MSLVESPPWQALKSKYQELSSLHMRDFFAQDKKRGTRLSLEAAGLYFDYSKNRVDEKTIDLLCESANACNLPLRIEQLFSGKLTNESGEMVGFHTALRQVNNFSFKTNNNAIQEIHASWEKIKKLSIRIREGDYKGFTNKSITDIVNIGIGGSSLGPQMAYNALKPYVKAPLRCHFISNLDDTDFYETVRTLNPETTLFIITSKTFTTKETLENARRATEWLMQAAKKENLIQTHFMAVTAAPEKAHEFGIQKDNIFMLWPWVGGRFSVWSAAGLSLAIAIGWEEFFEFLRGAHAMDTHFRQAEFNKNMPILLALLSIWYINFFHAKTQAIIPYSQRLVYLPDYLTQLHMESLGKSVQLDGSAVHWQTGAVVWGDLGTNSQHSFHQLFLQGTMVIPVDFIAVLKNSRESHWQLPLIANCLGQSQTLMEGYDKEGVMRDLINQGIEHEKAEKLATYRLIRGNNPSNTIILEELNPYSLGSLLALYEHKVYVQSVIWNINPFDQWGVERGKHLAKDILQALQAETDQSSFDSSTERLINYVLKIKGNRP.

The active-site Proton donor is the glutamate 351. Active-site residues include histidine 382 and lysine 509.

The protein belongs to the GPI family.

Its subcellular location is the cytoplasm. It carries out the reaction alpha-D-glucose 6-phosphate = beta-D-fructose 6-phosphate. It functions in the pathway carbohydrate biosynthesis; gluconeogenesis. Its pathway is carbohydrate degradation; glycolysis; D-glyceraldehyde 3-phosphate and glycerone phosphate from D-glucose: step 2/4. In terms of biological role, catalyzes the reversible isomerization of glucose-6-phosphate to fructose-6-phosphate. This Coxiella burnetii (strain RSA 493 / Nine Mile phase I) protein is Glucose-6-phosphate isomerase.